The primary structure comprises 192 residues: Pyridoxine/pyridoxamine 5'-phosphate oxidase (192 aa).

FMN is bound by residues 41 to 46 (RMMLLK), 56 to 57 (FT), R62, K63, and Q85. K46 serves as a coordination point for substrate. Residues Y103, R107, and S111 each contribute to the substrate site. Residues 120–121 (QS) and W165 each bind FMN. A substrate-binding site is contributed by 171–173 (RLH). FMN is bound at residue R175.

It belongs to the pyridoxamine 5'-phosphate oxidase family. As to quaternary structure, homodimer. Requires FMN as cofactor.

It catalyses the reaction pyridoxamine 5'-phosphate + O2 + H2O = pyridoxal 5'-phosphate + H2O2 + NH4(+). It carries out the reaction pyridoxine 5'-phosphate + O2 = pyridoxal 5'-phosphate + H2O2. Its pathway is cofactor metabolism; pyridoxal 5'-phosphate salvage; pyridoxal 5'-phosphate from pyridoxamine 5'-phosphate: step 1/1. It participates in cofactor metabolism; pyridoxal 5'-phosphate salvage; pyridoxal 5'-phosphate from pyridoxine 5'-phosphate: step 1/1. Its function is as follows. Catalyzes the oxidation of either pyridoxine 5'-phosphate (PNP) or pyridoxamine 5'-phosphate (PMP) into pyridoxal 5'-phosphate (PLP). This is Pyridoxine/pyridoxamine 5'-phosphate oxidase from Zymomonas mobilis subsp. mobilis (strain ATCC 31821 / ZM4 / CP4).